Here is a 266-residue protein sequence, read N- to C-terminus: Putative carbamate hydrolase RutD (266 aa).

One can recognise an AB hydrolase-1 domain in the interval 14-115; that stretch reads PVVVLISGLG…TMLVSVNGWL (102 aa).

This sequence belongs to the AB hydrolase superfamily. Hydrolase RutD family.

The catalysed reaction is carbamate + 2 H(+) = NH4(+) + CO2. Its function is as follows. Involved in pyrimidine catabolism. May facilitate the hydrolysis of carbamate, a reaction that can also occur spontaneously. The sequence is that of Putative carbamate hydrolase RutD from Shigella flexneri serotype X (strain 2002017).